The primary structure comprises 258 residues: L-fucose dehydrogenase (258 aa).

7 residues coordinate NADP(+): Ser-17, Ile-19, Arg-39, His-40, Glu-63, Leu-64, and Asn-90. 5 residues coordinate beta-L-fucose: Asn-94, Ser-140, Lys-141, Gln-147, and Tyr-153. Positions 153 and 157 each coordinate NADP(+). Tyr-153 (proton acceptor) is an active-site residue. Beta-L-fucose-binding residues include Ala-184 and Glu-185. NADP(+)-binding residues include Val-186 and Thr-188.

This sequence belongs to the short-chain dehydrogenases/reductases (SDR) family. Homotetramer; dimer of dimers.

The enzyme catalyses beta-L-fucose + NADP(+) = L-fucono-1,5-lactone + NADPH + H(+). It carries out the reaction D-arabinose + NADP(+) = D-arabinono-1,5-lactone + NADPH + H(+). It functions in the pathway carbohydrate degradation; L-fucose degradation. In terms of biological role, L-fucose dehydrogenase involved in an L-fucose degradation pathway. Catalyzes the oxidation of L-fucose to L-fucono-1,5-lactone. Can also act on D-arabinose, with lower catalytic efficiency, and has weak activity with L-galactose and 4-deoxy-L-fucose. Shows a preference for NADP(+) over NAD(+). This is L-fucose dehydrogenase from Burkholderia multivorans (strain ATCC 17616 / 249).